The following is a 622-amino-acid chain: 1-deoxy-D-xylulose-5-phosphate synthase (622 aa).

Thiamine diphosphate is bound by residues histidine 80 and 121–123; that span reads GHS. Mg(2+) is bound at residue aspartate 152. Thiamine diphosphate is bound by residues 153-154, asparagine 181, tyrosine 288, and glutamate 370; that span reads GA. Residue asparagine 181 participates in Mg(2+) binding.

Belongs to the transketolase family. DXPS subfamily. In terms of assembly, homodimer. Mg(2+) serves as cofactor. It depends on thiamine diphosphate as a cofactor.

It catalyses the reaction D-glyceraldehyde 3-phosphate + pyruvate + H(+) = 1-deoxy-D-xylulose 5-phosphate + CO2. The protein operates within metabolic intermediate biosynthesis; 1-deoxy-D-xylulose 5-phosphate biosynthesis; 1-deoxy-D-xylulose 5-phosphate from D-glyceraldehyde 3-phosphate and pyruvate: step 1/1. Catalyzes the acyloin condensation reaction between C atoms 2 and 3 of pyruvate and glyceraldehyde 3-phosphate to yield 1-deoxy-D-xylulose-5-phosphate (DXP). This Shewanella amazonensis (strain ATCC BAA-1098 / SB2B) protein is 1-deoxy-D-xylulose-5-phosphate synthase.